The chain runs to 64 residues: U-scoloptoxin(14)-Er1a (64 aa).

The signal sequence occupies residues 1–23; it reads MRPSFPLLLIMLLVCTAHHMVSG.

It belongs to the scoloptoxin-14 family. Post-translationally, contains 4 disulfide bonds. In terms of tissue distribution, expressed by the venom gland.

Its subcellular location is the secreted. The polypeptide is U-scoloptoxin(14)-Er1a (Ethmostigmus rubripes (Giant centipede)).